A 279-amino-acid chain; its full sequence is Movement protein (279 aa).

Over residues 256-266 (PPIAIGSPSAS) the composition is skewed to low complexity. The segment at 256–279 (PPIAIGSPSASRNNSFRSQVVNGL) is disordered. Residues 267–279 (RNNSFRSQVVNGL) show a composition bias toward polar residues.

This sequence belongs to the cucumovirus movement protein family.

Its subcellular location is the host cell junction. The protein localises to the host plasmodesma. Its function is as follows. Transports viral genome to neighboring plant cells directly through plasmosdesmata, without any budding. The movement protein allows efficient cell to cell propagation, by bypassing the host cell wall barrier. Acts by forming a tubular structure at the host plasmodesmata, enlarging it enough to allow free passage of virion capsids. This Cucumis sativus (Cucumber) protein is Movement protein.